The sequence spans 355 residues: (3aS,4S,5R,7aS)-5-hydroxy-7a-methyl-1-oxo-octahydro-1H-indene-4-carboxyl-CoA dehydrogenase (355 aa).

FMN is bound by residues 21–23 (GMG), 173–175 (AGG), and 196–197 (GT).

The protein belongs to the nitronate monooxygenase family.

It catalyses the reaction (3aS,4S,5R,7aS)-5-hydroxy-7a-methyl-1-oxo-octahydro-1H-indene-4-carboxyl-CoA + NAD(+) = (5R,7aS)-5-hydroxy-7a-methyl-1-oxo-2,3,5,6,7,7a-hexahydro-1H-indene-carboxyl-CoA + NADH + H(+). The protein operates within steroid metabolism; cholesterol degradation. Its activity is regulated as follows. Requires the presence of IpdF. Functionally, involved in the final steps of cholesterol and steroid degradation. Probably catalyzes the introduction of a double bound into the C ring of 5OH-HIC-CoA, leading to the formation of (5R,7aS)-5-hydroxy-7a-methyl-1-oxo-3,5,6,7-tetrahydro-2H-indene-4-carboxyl-CoA. This is (3aS,4S,5R,7aS)-5-hydroxy-7a-methyl-1-oxo-octahydro-1H-indene-4-carboxyl-CoA dehydrogenase from Mycobacterium tuberculosis (strain ATCC 25618 / H37Rv).